A 110-amino-acid chain; its full sequence is UPF0122 protein RBAM_015800 (110 aa).

Belongs to the UPF0122 family.

In terms of biological role, might take part in the signal recognition particle (SRP) pathway. This is inferred from the conservation of its genetic proximity to ftsY/ffh. May be a regulatory protein. This is UPF0122 protein RBAM_015800 from Bacillus velezensis (strain DSM 23117 / BGSC 10A6 / LMG 26770 / FZB42) (Bacillus amyloliquefaciens subsp. plantarum).